The primary structure comprises 72 residues: Large ribosomal subunit protein uL29 (72 aa).

This sequence belongs to the universal ribosomal protein uL29 family. Part of the 50S ribosomal subunit.

This Pyrococcus furiosus (strain ATCC 43587 / DSM 3638 / JCM 8422 / Vc1) protein is Large ribosomal subunit protein uL29.